Reading from the N-terminus, the 335-residue chain is Nucleoid-associated protein YejK (335 aa).

The protein belongs to the YejK family.

Its subcellular location is the cytoplasm. The protein resides in the nucleoid. The polypeptide is Nucleoid-associated protein YejK (Shigella boydii serotype 18 (strain CDC 3083-94 / BS512)).